The primary structure comprises 476 residues: Nitrosuccinate lyase (476 aa).

Arg137, Arg140, and Arg201 together coordinate fumarate. Ser302 (proton acceptor) is an active-site residue. Fumarate is bound by residues Lys308 and Asn310. The Proton donor role is filled by Arg341.

The protein belongs to the class-II fumarase/aspartase family. As to quaternary structure, homotetramer.

The enzyme catalyses 2-nitrobutanedioate = fumarate + nitrite + H(+). It functions in the pathway antibiotic biosynthesis. Functionally, part of a gene cluster involved in the biosynthesis of cremeomycin, a light-sensitive o-diazoquinone with antibacterial and antiproliferative effects. Catalyzes the formation of nitrous acid from nitrosuccinic acid (2-nitrobutanedioate) by elimination of its nitro group. The sequence is that of Nitrosuccinate lyase from Streptomyces cremeus.